Reading from the N-terminus, the 184-residue chain is NADH-quinone oxidoreductase subunit B (184 aa).

Residues Cys-37, Cys-38, Cys-103, and Cys-132 each coordinate [4Fe-4S] cluster.

This sequence belongs to the complex I 20 kDa subunit family. As to quaternary structure, NDH-1 is composed of 14 different subunits. Subunits NuoB, C, D, E, F, and G constitute the peripheral sector of the complex. The cofactor is [4Fe-4S] cluster.

Its subcellular location is the cell membrane. The enzyme catalyses a quinone + NADH + 5 H(+)(in) = a quinol + NAD(+) + 4 H(+)(out). NDH-1 shuttles electrons from NADH, via FMN and iron-sulfur (Fe-S) centers, to quinones in the respiratory chain. The immediate electron acceptor for the enzyme in this species is believed to be a menaquinone. Couples the redox reaction to proton translocation (for every two electrons transferred, four hydrogen ions are translocated across the cytoplasmic membrane), and thus conserves the redox energy in a proton gradient. The sequence is that of NADH-quinone oxidoreductase subunit B from Mycolicibacterium vanbaalenii (strain DSM 7251 / JCM 13017 / BCRC 16820 / KCTC 9966 / NRRL B-24157 / PYR-1) (Mycobacterium vanbaalenii).